The sequence spans 396 residues: Elongation factor Tu (396 aa).

Positions lysine 10 to glutamate 206 constitute a tr-type G domain. Residues glycine 19 to threonine 26 are G1. Glycine 19–threonine 26 provides a ligand contact to GTP. Residue threonine 26 coordinates Mg(2+). The segment at glycine 60–asparagine 64 is G2. The interval aspartate 81–glycine 84 is G3. GTP is bound by residues aspartate 81–histidine 85 and asparagine 136–aspartate 139. Residues asparagine 136–aspartate 139 form a G4 region. Positions serine 174–lysine 176 are G5.

It belongs to the TRAFAC class translation factor GTPase superfamily. Classic translation factor GTPase family. EF-Tu/EF-1A subfamily. Monomer.

The protein localises to the cytoplasm. It carries out the reaction GTP + H2O = GDP + phosphate + H(+). Functionally, GTP hydrolase that promotes the GTP-dependent binding of aminoacyl-tRNA to the A-site of ribosomes during protein biosynthesis. This chain is Elongation factor Tu, found in Polaromonas naphthalenivorans (strain CJ2).